A 452-amino-acid chain; its full sequence is Phosphoglucosamine mutase (452 aa).

Ser97 functions as the Phosphoserine intermediate in the catalytic mechanism. The Mg(2+) site is built by Ser97, Asp236, Asp238, and Asp240. Ser97 is modified (phosphoserine).

The protein belongs to the phosphohexose mutase family. Mg(2+) serves as cofactor. Activated by phosphorylation.

The enzyme catalyses alpha-D-glucosamine 1-phosphate = D-glucosamine 6-phosphate. Its function is as follows. Catalyzes the conversion of glucosamine-6-phosphate to glucosamine-1-phosphate. The polypeptide is Phosphoglucosamine mutase (Prochlorococcus marinus (strain MIT 9515)).